Consider the following 109-residue polypeptide: MATSKLQALWNHPAGPKTIHFWAPTFKWGISIANIADFQKPPENISYLQQIAVTCTGMIWCRCSTIITPKNWNLFSVNVAMAATGIYQLTRKIKYDYVSEAEAAVEIEG.

3 consecutive transmembrane segments (helical) span residues 19–35 (IHFWAPTFKWGISIANI), 51–67 (IAVTCTGMIWCRCSTII), and 74–90 (LFSVNVAMAATGIYQLT).

This sequence belongs to the mitochondrial pyruvate carrier (MPC) (TC 2.A.105) family.

The protein resides in the mitochondrion inner membrane. In terms of biological role, mediates the uptake of pyruvate into mitochondria. This is Mitochondrial pyruvate carrier 2 from Arabidopsis thaliana (Mouse-ear cress).